The sequence spans 158 residues: Cyclic pyranopterin monophosphate synthase (158 aa).

Residues 75–77 (LCH) and 113–114 (ME) each bind substrate. Asp-128 is a catalytic residue.

This sequence belongs to the MoaC family. As to quaternary structure, homohexamer; trimer of dimers.

It carries out the reaction (8S)-3',8-cyclo-7,8-dihydroguanosine 5'-triphosphate = cyclic pyranopterin phosphate + diphosphate. Its pathway is cofactor biosynthesis; molybdopterin biosynthesis. Functionally, catalyzes the conversion of (8S)-3',8-cyclo-7,8-dihydroguanosine 5'-triphosphate to cyclic pyranopterin monophosphate (cPMP). This Histophilus somni (strain 129Pt) (Haemophilus somnus) protein is Cyclic pyranopterin monophosphate synthase.